Consider the following 134-residue polypeptide: MSWQTYVDDHLMCDIEGHEGHRLTAAAIVGHDGSVWAQSATFPQFKPEEMNGIMTDFNEPGHLAPTGLHLGGTKYMVIQGEAGAVIRGKKGSGGITIKKTGQALVFGIYEEPVTPGQCNMVVERLGDYHLEQGL.

The cysteines at positions 13 and 118 are disulfide-linked. The Involved in PIP2 interaction signature appears at 84-100 (AVIRGKKGSGGITIKKT). Residue Thr114 is modified to Phosphothreonine.

The protein belongs to the profilin family. In terms of assembly, occurs in many kinds of cells as a complex with monomeric actin in a 1:1 ratio. Phosphorylated by MAP kinases.

It is found in the cytoplasm. The protein localises to the cytoskeleton. Functionally, binds to actin and affects the structure of the cytoskeleton. At high concentrations, profilin prevents the polymerization of actin, whereas it enhances it at low concentrations. The chain is Profilin-3 from Olea europaea (Common olive).